We begin with the raw amino-acid sequence, 251 residues long: Insulin-induced gene 1 protein (251 aa).

Topologically, residues 1–58 (MQTLEEHCWSCSCTRGRDKKGTRLSTWLAQRAAKAMSSLNSLLSLAYHTLASSEGRSL) are cytoplasmic. A helical transmembrane segment spans residues 59–81 (IRRSLVLFAVGVFLALVLNLLQI). The Extracellular portion of the chain corresponds to 82–100 (QRNVTLFPEEVIATIFSSA). The chain crosses the membrane as a helical span at residues 101 to 118 (WWVPPCCGTAAAVVGLLY). Residues 119 to 133 (PCIDSHLGEPHKFKR) lie on the Cytoplasmic side of the membrane. Residues 134–156 (EWASVMRCIAVFVGINHASAKLD) traverse the membrane as a helical segment. Residues 157-159 (FAN) are Extracellular-facing. A helical transmembrane segment spans residues 160-178 (NVQLSLTLAALSLGLWWTF). Over 179-183 (DRSRS) the chain is Cytoplasmic. A helical transmembrane segment spans residues 184–205 (GLGLGITIAFLATLITQFLVYN). At 206–219 (GVYQYTSPDFLYIR) the chain is on the extracellular side. Residues 220 to 237 (SWLPCIFFSGGVTVGNIG) form a helical membrane-spanning segment. Residues 238–251 (RQLAMGSSEKTHSD) lie on the Cytoplasmic side of the membrane. The short motif at 245–251 (SEKTHSD) is the KxHxx element.

The protein belongs to the INSIG family. Interacts with scap; interaction is direct and only takes place in the presence of sterols; it prevents interaction between scap and the coat protein complex II (COPII). Associates with the SCAP-SREBP complex; association is mediated via its interaction with scap and only takes place in the presence of sterols.

Its subcellular location is the endoplasmic reticulum membrane. Functionally, oxysterol-binding protein that mediates feedback control of cholesterol synthesis by controlling both endoplasmic reticulum to Golgi transport of scap and degradation of hmgcr. Acts as a negative regulator of cholesterol biosynthesis by mediating the retention of the SCAP-SREBP complex in the endoplasmic reticulum, thereby blocking the processing of sterol regulatory element-binding proteins (SREBPs). Binds oxysterol, including 25-hydroxycholesterol, regulating interaction with scap and retention of the SCAP-SREBP complex in the endoplasmic reticulum. In presence of oxysterol, interacts with scap, retaining the SCAP-SREBP complex in the endoplasmic reticulum, thereby preventing scap from escorting SREBPs to the Golgi. Sterol deprivation reduces oxysterol-binding, disrupting the interaction between insig1 and scap, thereby promoting Golgi transport of the SCAP-SREBP complex, followed by processing and nuclear translocation of SREBPs. Also regulates cholesterol synthesis by regulating degradation of hmgcr. In Xenopus tropicalis (Western clawed frog), this protein is Insulin-induced gene 1 protein.